A 326-amino-acid polypeptide reads, in one-letter code: tRNA-modifying protein YgfZ (326 aa).

Folate is bound by residues Trp-27 and Trp-189.

This sequence belongs to the tRNA-modifying YgfZ family.

The protein resides in the cytoplasm. Its function is as follows. Folate-binding protein involved in regulating the level of ATP-DnaA and in the modification of some tRNAs. It is probably a key factor in regulatory networks that act via tRNA modification, such as initiation of chromosomal replication. The chain is tRNA-modifying protein YgfZ from Salmonella arizonae (strain ATCC BAA-731 / CDC346-86 / RSK2980).